We begin with the raw amino-acid sequence, 34 residues long: Turripeptide OL127 (34 aa).

Post-translationally, contains 4 disulfide bonds. As to expression, expressed by the venom duct.

The protein localises to the secreted. Acts as a neurotoxin by inhibiting an ion channel. This chain is Turripeptide OL127, found in Iotyrris olangoensis (Sea snail).